We begin with the raw amino-acid sequence, 190 residues long: dTTP/UTP pyrophosphatase (190 aa).

The active-site Proton acceptor is the aspartate 70.

Belongs to the Maf family. YhdE subfamily. It depends on a divalent metal cation as a cofactor.

It localises to the cytoplasm. The enzyme catalyses dTTP + H2O = dTMP + diphosphate + H(+). It catalyses the reaction UTP + H2O = UMP + diphosphate + H(+). Nucleoside triphosphate pyrophosphatase that hydrolyzes dTTP and UTP. May have a dual role in cell division arrest and in preventing the incorporation of modified nucleotides into cellular nucleic acids. The sequence is that of dTTP/UTP pyrophosphatase from Gloeobacter violaceus (strain ATCC 29082 / PCC 7421).